Here is a 90-residue protein sequence, read N- to C-terminus: Lectin-1 (90 aa).

Gln-1 bears the Pyrrolidone carboxylic acid mark. The cysteines at positions 46 and 71 are disulfide-linked.

In terms of processing, the N-terminus is blocked. Contains seven disulfide bonds. Post-translationally, proteolytically cleaved. Major mature form may consist of cleaved, disulfide-bonded N-terminal and C-terminal chains.

Lectin with specificity for complex N-linked glycans and O-linked glycans. Has hemagglutinating activity towards rabbit erythrocytes. The chain is Lectin-1 from Hypnea musciformis (Red alga).